Consider the following 306-residue polypeptide: Replication termination factor 2 (306 aa).

The interval 192–306 (RAKLEKKTKK…HWVTHTSYCF (115 aa)) is disordered. Basic and acidic residues predominate over residues 226–240 (GKSEEADPDPREKKS). A Phosphoserine modification is found at Ser-287.

It belongs to the rtf2 family. In terms of assembly, interacts with DDI2; probably also interacts with DDI1. Undergoes proteasomal degradation, via DDI1 and DDI2. Removal from stalled replisomes and degradation are required for genome stability.

Its subcellular location is the chromosome. Functionally, replication termination factor which is a component of the elongating replisome. Required for ATR pathway signaling upon DNA damage and has a positive activity during DNA replication. Might function to facilitate fork pausing at replication fork barriers like the rDNA. May be globally required to stimulate ATR signaling after the fork stalls or encounters a lesion. Interacts with nascent DNA. In Rattus norvegicus (Rat), this protein is Replication termination factor 2.